Reading from the N-terminus, the 302-residue chain is MNTPDIAQVKRFLLNLQDEICQKLEQADGAARFAEDSWQRPGGGGGRSRVLRQGRVFEQAGVNFSHVHGDEMPASATAHRPELAGRSFEALGVSLVIHPENPYIPTSHANVRFFIAEKPGADPVWWFGGGFDLTPFYGFTEDAVHWHQTAFDLCLPFGAEVYPRYKKWCDDYFHLKHRNEQRGIGGLFFDDLNAHGFDQSFRFMQAVGRGFCDAYLPIVERRKALTWGERERDFQLYRRGRYVEFNLVWDRGTLFGLQTGGRTESILMSMPPLVRWEYDYQPREDSPEAALYRDFIVVKEWL.

A substrate-binding site is contributed by Ser94. The a divalent metal cation site is built by His98 and His108. Residue His108 is the Proton donor of the active site. Asn110–Arg112 provides a ligand contact to substrate. The a divalent metal cation site is built by His147 and His177. Residues Tyr242–Glu277 form an important for dimerization region. Gly260–Arg262 provides a ligand contact to substrate.

This sequence belongs to the aerobic coproporphyrinogen-III oxidase family. In terms of assembly, homodimer. A divalent metal cation serves as cofactor.

The protein resides in the cytoplasm. The enzyme catalyses coproporphyrinogen III + O2 + 2 H(+) = protoporphyrinogen IX + 2 CO2 + 2 H2O. It functions in the pathway porphyrin-containing compound metabolism; protoporphyrin-IX biosynthesis; protoporphyrinogen-IX from coproporphyrinogen-III (O2 route): step 1/1. In terms of biological role, involved in the heme biosynthesis. Catalyzes the aerobic oxidative decarboxylation of propionate groups of rings A and B of coproporphyrinogen-III to yield the vinyl groups in protoporphyrinogen-IX. In Erwinia tasmaniensis (strain DSM 17950 / CFBP 7177 / CIP 109463 / NCPPB 4357 / Et1/99), this protein is Oxygen-dependent coproporphyrinogen-III oxidase.